Here is a 220-residue protein sequence, read N- to C-terminus: Small ribosomal subunit protein uS3c (220 aa).

One can recognise a KH type-2 domain in the interval Val-48–Asp-119.

It belongs to the universal ribosomal protein uS3 family. In terms of assembly, part of the 30S ribosomal subunit.

The protein localises to the plastid. It is found in the chloroplast. This Psilotum nudum (Whisk fern) protein is Small ribosomal subunit protein uS3c (rps3).